Reading from the N-terminus, the 281-residue chain is Pantothenate synthetase (281 aa).

ATP is bound at residue 26–33; that stretch reads MGYLHQGH. Catalysis depends on His-33, which acts as the Proton donor. Gln-57 serves as a coordination point for (R)-pantoate. Gln-57 is a binding site for beta-alanine. 143-146 provides a ligand contact to ATP; that stretch reads GQKD. (R)-pantoate is bound at residue Gln-149. Residues Val-172 and 180-183 contribute to the ATP site; that span reads LSSR.

The protein belongs to the pantothenate synthetase family. Homodimer.

The protein resides in the cytoplasm. The enzyme catalyses (R)-pantoate + beta-alanine + ATP = (R)-pantothenate + AMP + diphosphate + H(+). Its pathway is cofactor biosynthesis; (R)-pantothenate biosynthesis; (R)-pantothenate from (R)-pantoate and beta-alanine: step 1/1. Functionally, catalyzes the condensation of pantoate with beta-alanine in an ATP-dependent reaction via a pantoyl-adenylate intermediate. The sequence is that of Pantothenate synthetase from Chloroflexus aurantiacus (strain ATCC 29366 / DSM 635 / J-10-fl).